Here is a 405-residue protein sequence, read N- to C-terminus: Polyketide biosynthesis cytochrome P450 PksS (405 aa).

The chain crosses the membrane as a helical span at residues 231–251; it reads LYSMLFLLVVAGLETTVNLLG. C352 provides a ligand contact to heme.

Belongs to the cytochrome P450 family.

The protein localises to the cell membrane. Its pathway is antibiotic biosynthesis; bacillaene biosynthesis. Its function is as follows. Involved in the metabolism of the antibiotic polyketide bacillaene which is involved in secondary metabolism. The substrate is dihydrobacillaene. This chain is Polyketide biosynthesis cytochrome P450 PksS (pksS), found in Bacillus subtilis (strain 168).